Consider the following 381-residue polypeptide: tRNA pseudouridine synthase D (381 aa).

D81 serves as the catalytic Nucleophile. The 176-residue stretch at 160–335 (GMPNYFGSQR…TLGSRRFFWV (176 aa)) folds into the TRUD domain.

This sequence belongs to the pseudouridine synthase TruD family.

The catalysed reaction is uridine(13) in tRNA = pseudouridine(13) in tRNA. In terms of biological role, responsible for synthesis of pseudouridine from uracil-13 in transfer RNAs. The polypeptide is tRNA pseudouridine synthase D (Helicobacter pylori (strain P12)).